Consider the following 121-residue polypeptide: MQYVYIFIGGALGALLRYLISFLNTDGGFPIGTLVANLTGAFIMGLLTALTIAFFSNHPTLKKAITTGFLGALTTFSTFQLELIHMFDHQQFITLLLYAITSYVFGILLCYVGIKLGGGLS.

Helical transmembrane passes span Y3–L23, V35–F55, A64–I84, and F92–V112. 2 residues coordinate Na(+): G71 and T74.

This sequence belongs to the fluoride channel Fluc/FEX (TC 1.A.43) family.

The protein localises to the cell membrane. It carries out the reaction fluoride(in) = fluoride(out). Na(+) is not transported, but it plays an essential structural role and its presence is essential for fluoride channel function. Functionally, fluoride-specific ion channel. Important for reducing fluoride concentration in the cell, thus reducing its toxicity. This Staphylococcus aureus (strain bovine RF122 / ET3-1) protein is Fluoride-specific ion channel FluC 1.